The chain runs to 134 residues: Large ribosomal subunit protein uL22 (134 aa).

Belongs to the universal ribosomal protein uL22 family. As to quaternary structure, part of the 50S ribosomal subunit.

Its function is as follows. This protein binds specifically to 23S rRNA; its binding is stimulated by other ribosomal proteins, e.g. L4, L17, and L20. It is important during the early stages of 50S assembly. It makes multiple contacts with different domains of the 23S rRNA in the assembled 50S subunit and ribosome. Functionally, the globular domain of the protein is located near the polypeptide exit tunnel on the outside of the subunit, while an extended beta-hairpin is found that lines the wall of the exit tunnel in the center of the 70S ribosome. This chain is Large ribosomal subunit protein uL22, found in Karelsulcia muelleri (strain GWSS) (Sulcia muelleri).